Here is a 562-residue protein sequence, read N- to C-terminus: MISISSTRVPLIPPEDIPLEDKKENEFGQLTSEEYLYQSKSRDGKALQDPILDAPAYHVSLITYLNYLILIILGHIHDFLGLTFQKEKHKDIMEQDGLAPWFSTFESFYVRRLKQRIDDCFSRPTTGVPGRFIRCLDRVSHNLNDYFTYPGTTSMCLNLSSYNYLGFAQSEGQCTTAALEATDKYGVYSGGPRTRIGTTDLHVMTEKYVAQFVGKEDAILFSMGYGTNANFFNSFLDSKCLVISDSLNHTSIRTGVRLSGAAVKTFKHNDMRALEKLIREQIVQGQSKTHRPWKKIIICVEGLYSMEGTMANLPKLVELKKKYKCYLFVDEAHSIGAMGPSGRGVCDFFGIPCSDIDIMMGTLTKSFGAAGGYIAADKWIIDRFRLDLTTPHYGEPTPAPVLAQIASSLKTITGDINPGEGQERLQRIAFNARYLRLALQRLGFIVYGIADSPVIPMLLYAPSKMPAFSRMMLQRKIAVVVVAYPATPLIESRVRFCVSAALTKEDIDYLLQHINEVGDKLFLKVSSGKAGGSLDGKPPRWNIDEVIKRTPTDCKDDSFFRI.

The helical transmembrane segment at 61 to 81 threads the bilayer; it reads LITYLNYLILIILGHIHDFLG. Lysine 365 bears the N6-(pyridoxal phosphate)lysine mark.

It belongs to the class-II pyridoxal-phosphate-dependent aminotransferase family. Requires pyridoxal 5'-phosphate as cofactor.

The protein localises to the membrane. It catalyses the reaction L-serine + hexadecanoyl-CoA + H(+) = 3-oxosphinganine + CO2 + CoA. Its pathway is lipid metabolism; sphingolipid metabolism. The protein is Serine palmitoyltransferase 2 (LCB2) of Kluyveromyces lactis (strain ATCC 8585 / CBS 2359 / DSM 70799 / NBRC 1267 / NRRL Y-1140 / WM37) (Yeast).